Consider the following 426-residue polypeptide: Serine--tRNA ligase (426 aa).

233-235 (TAE) serves as a coordination point for L-serine. 264 to 266 (RSE) is a binding site for ATP. E287 contributes to the L-serine binding site. 351–354 (EISS) lines the ATP pocket. S387 lines the L-serine pocket.

The protein belongs to the class-II aminoacyl-tRNA synthetase family. Type-1 seryl-tRNA synthetase subfamily. In terms of assembly, homodimer. The tRNA molecule binds across the dimer.

The protein resides in the cytoplasm. The enzyme catalyses tRNA(Ser) + L-serine + ATP = L-seryl-tRNA(Ser) + AMP + diphosphate + H(+). It carries out the reaction tRNA(Sec) + L-serine + ATP = L-seryl-tRNA(Sec) + AMP + diphosphate + H(+). It participates in aminoacyl-tRNA biosynthesis; selenocysteinyl-tRNA(Sec) biosynthesis; L-seryl-tRNA(Sec) from L-serine and tRNA(Sec): step 1/1. Functionally, catalyzes the attachment of serine to tRNA(Ser). Is also able to aminoacylate tRNA(Sec) with serine, to form the misacylated tRNA L-seryl-tRNA(Sec), which will be further converted into selenocysteinyl-tRNA(Sec). The sequence is that of Serine--tRNA ligase from Ectopseudomonas mendocina (strain ymp) (Pseudomonas mendocina).